The sequence spans 137 residues: Probable Hsp20 family chaperone (137 aa).

The sHSP domain occupies 25 to 137 (LTNNNNIMKT…PKEKHYIKLN (113 aa)).

It belongs to the small heat shock protein (HSP20) family.

Probable chaperone. This is Probable Hsp20 family chaperone from Onion yellows phytoplasma (strain OY-M).